Here is a 280-residue protein sequence, read N- to C-terminus: Proteasome subunit beta 2 (280 aa).

A propeptide spans 1–52 (removed in mature form; by autocatalysis); sequence MTERERGQGLPAEFFAVGTASFVELLSRTAPQLLPVNRVRDGSHPMPDIPHG. Threonine 53 acts as the Nucleophile in catalysis.

The protein belongs to the peptidase T1B family. As to quaternary structure, the 20S proteasome core is composed of 14 alpha and 14 beta subunits that assemble into four stacked heptameric rings, resulting in a barrel-shaped structure. The two inner rings, each composed of seven catalytic beta subunits, are sandwiched by two outer rings, each composed of seven alpha subunits. The catalytic chamber with the active sites is on the inside of the barrel. Has a gated structure, the ends of the cylinder being occluded by the N-termini of the alpha-subunits. Is capped by the proteasome-associated ATPase, ARC.

It localises to the cytoplasm. The enzyme catalyses Cleavage of peptide bonds with very broad specificity.. It participates in protein degradation; proteasomal Pup-dependent pathway. Its activity is regulated as follows. The formation of the proteasomal ATPase ARC-20S proteasome complex, likely via the docking of the C-termini of ARC into the intersubunit pockets in the alpha-rings, may trigger opening of the gate for substrate entry. Interconversion between the open-gate and close-gate conformations leads to a dynamic regulation of the 20S proteasome proteolysis activity. In terms of biological role, component of the proteasome core, a large protease complex with broad specificity involved in protein degradation. In Thermomonospora curvata (strain ATCC 19995 / DSM 43183 / JCM 3096 / KCTC 9072 / NBRC 15933 / NCIMB 10081 / Henssen B9), this protein is Proteasome subunit beta 2.